Here is a 602-residue protein sequence, read N- to C-terminus: VIN3-like protein 1 (602 aa).

Positions 1 to 38 (MDSSSTKSKISHSRKTNKKSNKKHESNGKQQQQQDVDG) are disordered. Over residues 9 to 22 (KISHSRKTNKKSNK) the composition is skewed to basic residues. The segment at 67–137 (RCSCCVCHNF…CFCCYSCGKV (71 aa)) adopts a PHD-type zinc-finger fold. The short motif at 144–151 (WKKQLVAA) is the Nuclear localization signal element. One can recognise a Fibronectin type-III domain in the interval 242 to 340 (VPAACRFHFE…AMCFTKSVEI (99 aa)). Residues 430 to 470 (LNEEFTPPDSSGGEDNGVPLNSLAEADGGDHDDNCDDAVSN) form a disordered region. The tract at residues 502–602 (AISDSNDSEN…RPNNGVMTSH (101 aa)) is VIN3-Interacting Domain (VID).

Interacts with VIN3 and VIL2. The heterodimer made of VIN3 and VIL1 is required for establishing the vernalization-induced epigenetic silencing of FLC. Component of the plant homeodomain / polycomb repressive complex 2 (PHD-PRC2) large complex during prolonged cold, composed of core PRC2 components (VRN2, EZA1, FIE and MSI1), and three related PHD finger proteins (VIL1, VIL2 and VIN3) that mediates histone H3 trimethylation on 'Lys-27' (H3K27me3). In terms of tissue distribution, accumulates in shoot and root apices, and in leaves.

Its subcellular location is the nucleus. The protein resides in the nucleus speckle. Involved in both the vernalization and photoperiod pathways by regulating expression of the related floral repressors FLOWERING LOCUS C (FLC) and FLOWERING LOCUS M (FLM). Together with VIN3, required during vernalization for the modifications of FLC and FLM chromatin that are associated with an epigenetically silenced state (e.g. chromatin modifications, histone deacetylation, and trimethylated H3 'Lys-4' H3K4me3 and 'Lys-27' H3K27me3) and with acquisition of competence to flower. Promotes flowering in short days (SD=8 hours light/16 hours dark). Associates dynamically at FLC locus; during vernalization, binds to specific sites, but when in warm conditions, distributed along the whole locus. The polypeptide is VIN3-like protein 1 (VIL1) (Arabidopsis thaliana (Mouse-ear cress)).